Reading from the N-terminus, the 908-residue chain is Transcriptional repressor ILP1 (908 aa).

2 disordered regions span residues 1 to 113 (MGSN…PQAG) and 238 to 277 (VGPRPQKDDKKGVFDFGDENPTAKETTTSSIYEDEDEEDK). Over residues 25–47 (ATPSSKPTSTLSSSKPKTLSASA) the composition is skewed to low complexity. A coiled-coil region spans residues 426–453 (MQNKGSLIEEIEDQMKELNEKHALSILE). The segment covering 513 to 530 (EFGRDENLQKRREVEQRA) has biased composition (basic and acidic residues). Residues 513-574 (EFGRDENLQK…ESDTETSAYK (62 aa)) form a disordered region.

Belongs to the GCF family. As to quaternary structure, interacts with STIPL1/NTR1.

It localises to the nucleus. Transcriptional repressor regulating endoreduplication through control of A-type cyclins expression. Does not bind to promoter sequences (in vitro) and may act by interacting with tissue-specific transcription factors. Enhances the endocycle in endoreduplicating cells in seedlings. Required for efficient splicing. This is Transcriptional repressor ILP1 from Arabidopsis thaliana (Mouse-ear cress).